The sequence spans 388 residues: Succinate--CoA ligase [ADP-forming] subunit beta (388 aa).

Positions 9 to 244 constitute an ATP-grasp domain; sequence KDLLSSYDIA…PSQENVRDVL (236 aa). ATP contacts are provided by residues Lys-46, 53–55, Val-102, and Glu-107; that span reads GRG. Mg(2+)-binding residues include Asn-199 and Asp-213. Substrate-binding positions include Asn-264 and 321 to 323; that span reads GIM.

Belongs to the succinate/malate CoA ligase beta subunit family. In terms of assembly, heterotetramer of two alpha and two beta subunits. Mg(2+) is required as a cofactor.

It carries out the reaction succinate + ATP + CoA = succinyl-CoA + ADP + phosphate. The catalysed reaction is GTP + succinate + CoA = succinyl-CoA + GDP + phosphate. The protein operates within carbohydrate metabolism; tricarboxylic acid cycle; succinate from succinyl-CoA (ligase route): step 1/1. Functionally, succinyl-CoA synthetase functions in the citric acid cycle (TCA), coupling the hydrolysis of succinyl-CoA to the synthesis of either ATP or GTP and thus represents the only step of substrate-level phosphorylation in the TCA. The beta subunit provides nucleotide specificity of the enzyme and binds the substrate succinate, while the binding sites for coenzyme A and phosphate are found in the alpha subunit. This is Succinate--CoA ligase [ADP-forming] subunit beta from Chlamydia felis (strain Fe/C-56) (Chlamydophila felis).